A 216-amino-acid polypeptide reads, in one-letter code: Probable GTP-binding protein EngB (216 aa).

Residues 27–201 enclose the EngB-type G domain; the sequence is EGIEVAFAGR…REKLDTWFSE (175 aa). GTP contacts are provided by residues 35 to 42, 62 to 66, 80 to 83, 147 to 150, and 180 to 182; these read GRSNAGKS, GRTQL, DLPG, TKAD, and FSS. Ser42 and Thr64 together coordinate Mg(2+).

The protein belongs to the TRAFAC class TrmE-Era-EngA-EngB-Septin-like GTPase superfamily. EngB GTPase family. It depends on Mg(2+) as a cofactor.

Necessary for normal cell division and for the maintenance of normal septation. The polypeptide is Probable GTP-binding protein EngB (Yersinia pestis bv. Antiqua (strain Angola)).